Consider the following 187-residue polypeptide: Ribosome maturation factor RimM (187 aa).

The region spanning 95–178 (DEDEFFYADL…GLVEDKDESL (84 aa)) is the PRC barrel domain.

The protein belongs to the RimM family. As to quaternary structure, binds ribosomal protein uS19.

The protein resides in the cytoplasm. Its function is as follows. An accessory protein needed during the final step in the assembly of 30S ribosomal subunit, possibly for assembly of the head region. Essential for efficient processing of 16S rRNA. May be needed both before and after RbfA during the maturation of 16S rRNA. It has affinity for free ribosomal 30S subunits but not for 70S ribosomes. The protein is Ribosome maturation factor RimM of Sinorhizobium fredii (strain NBRC 101917 / NGR234).